The sequence spans 614 residues: Vitamin B12 transporter BtuB (614 aa).

A signal peptide spans 1 to 20; that stretch reads MIKKASLLTACSVTAFSAWA. A TonB box motif is present at residues 26–33; sequence DTLVVTAN. In terms of domain architecture, TBDR plug spans 38 to 152; the sequence is PRSTVLAPTT…IGGVVNIITT (115 aa). Residues Leu-83, Ser-85, Asn-92, and 110-111 contribute to the cyanocob(III)alamin site; that span reads VS. Residues 155-614 enclose the TBDR beta-barrel domain; the sequence is HPGTEISAGW…EYTLSGSYTF (460 aa). Beta stranded transmembrane passes span 158-165, 169-178, and 184-195; these read TEISAGWG, YQNYDVSTQQ, and TRVTLLGDYAHT. Ca(2+)-binding residues include Asp-199, Gln-211, Asp-213, and Asp-215. Transmembrane regions (beta stranded) follow at residues 217–227 and 232–248; these read FLSKTLYGALE and DVWSGFVRGYGYDNRTN. Positions 249 and 250 each coordinate Ca(2+). Ala-251 contributes to the cyanocob(III)alamin binding site. Position 261 (Asp-261) interacts with Ca(2+). The next 14 beta stranded transmembrane spans lie at 263–277, 279–296, 309–325, 328–337, 353–369, 371–381, 385–400, 403–417, 434–443, 449–458, 473–490, 494–509, 517–529, and 535–550; these read RKLYSQSWDAGLRYN, ELIKSQLITSYSHSKDYN, TLDEMKQYTVQWANNII, HGNIGAGVDW, YDQRNTGIYLTGLQQVG, FTFEGAGRSDD, FGRHGTWQTSAGWEFI, YRFIASYGTSYKAPN, KSKQWEGAFE, VNWRISGYRN, YYNEGKARIKGVEATANF, PLTHTVSYDYVDARNA, RRAKQQVKYQLDW, and DWGITYQYLGTRYDKD. A cyanocob(III)alamin-binding site is contributed by Thr-309. Arg-517 serves as a coordination point for cyanocob(III)alamin. Tyr-551 lines the cyanocob(III)alamin pocket. A run of 3 beta stranded transmembrane segments spans residues 558 to 572, 585 to 596, and 602 to 614; these read TVKMGGVSLWDLAVA, IANLFDKDYETV, and AGREYTLSGSYTF. Positions 597–614 match the TonB C-terminal box motif; that stretch reads YGYQTAGREYTLSGSYTF.

The protein belongs to the TonB-dependent receptor family. BtuB (TC 1.B.14.3.1) subfamily.

It localises to the cell outer membrane. Involved in the active translocation of vitamin B12 (cyanocobalamin) across the outer membrane to the periplasmic space. It derives its energy for transport by interacting with the trans-periplasmic membrane protein TonB. This is Vitamin B12 transporter BtuB from Escherichia coli O6:K15:H31 (strain 536 / UPEC).